The chain runs to 632 residues: tRNA 5-methylaminomethyl-2-thiouridine biosynthesis bifunctional protein MnmC (632 aa).

The interval 1–247 (MNSRIFPAAM…KWHMTLGQRL (247 aa)) is tRNA (mnm(5)s(2)U34)-methyltransferase. The tract at residues 267–632 (VGAGLAGAAV…TDLLAQIAPR (366 aa)) is FAD-dependent cmnm(5)s(2)U34 oxidoreductase.

It in the N-terminal section; belongs to the methyltransferase superfamily. tRNA (mnm(5)s(2)U34)-methyltransferase family. In the C-terminal section; belongs to the DAO family. FAD serves as cofactor.

The protein resides in the cytoplasm. It catalyses the reaction 5-aminomethyl-2-thiouridine(34) in tRNA + S-adenosyl-L-methionine = 5-methylaminomethyl-2-thiouridine(34) in tRNA + S-adenosyl-L-homocysteine + H(+). Its function is as follows. Catalyzes the last two steps in the biosynthesis of 5-methylaminomethyl-2-thiouridine (mnm(5)s(2)U) at the wobble position (U34) in tRNA. Catalyzes the FAD-dependent demodification of cmnm(5)s(2)U34 to nm(5)s(2)U34, followed by the transfer of a methyl group from S-adenosyl-L-methionine to nm(5)s(2)U34, to form mnm(5)s(2)U34. This chain is tRNA 5-methylaminomethyl-2-thiouridine biosynthesis bifunctional protein MnmC, found in Bordetella bronchiseptica (strain ATCC BAA-588 / NCTC 13252 / RB50) (Alcaligenes bronchisepticus).